Reading from the N-terminus, the 730-residue chain is Catalase-peroxidase (730 aa).

The interval 1–25 (MEEKKCPVTGHTQHTPTGGGTKNKD) is disordered. The tryptophyl-tyrosyl-methioninium (Trp-Tyr) (with M-244) cross-link spans 95–218 (WHSAGTYRLN…LAAVQMGLIY (124 aa)). His96 acts as the Proton acceptor in catalysis. Positions 218 to 244 (YVNPEGPNGQPSVLASGRDVRDTFKRM) form a cross-link, tryptophyl-tyrosyl-methioninium (Tyr-Met) (with W-95). His259 contacts heme b.

This sequence belongs to the peroxidase family. Peroxidase/catalase subfamily. Homodimer or homotetramer. Requires heme b as cofactor. In terms of processing, formation of the three residue Trp-Tyr-Met cross-link is important for the catalase, but not the peroxidase activity of the enzyme.

The enzyme catalyses H2O2 + AH2 = A + 2 H2O. It catalyses the reaction 2 H2O2 = O2 + 2 H2O. Functionally, bifunctional enzyme with both catalase and broad-spectrum peroxidase activity. The protein is Catalase-peroxidase of Desulfitobacterium hafniense (strain Y51).